Reading from the N-terminus, the 89-residue chain is Small ribosomal subunit protein uS15 (89 aa).

It belongs to the universal ribosomal protein uS15 family. As to quaternary structure, part of the 30S ribosomal subunit. Forms a bridge to the 50S subunit in the 70S ribosome, contacting the 23S rRNA.

Its function is as follows. One of the primary rRNA binding proteins, it binds directly to 16S rRNA where it helps nucleate assembly of the platform of the 30S subunit by binding and bridging several RNA helices of the 16S rRNA. Functionally, forms an intersubunit bridge (bridge B4) with the 23S rRNA of the 50S subunit in the ribosome. The protein is Small ribosomal subunit protein uS15 of Bartonella tribocorum (strain CIP 105476 / IBS 506).